The sequence spans 325 residues: Beta-1,3-galactosyltransferase brn (325 aa).

Over 1-7 the chain is Cytoplasmic; the sequence is MQSKHRK. Residues 8 to 28 traverse the membrane as a helical; Signal-anchor for type II membrane protein segment; it reads LLLRCLLVLPLILLVDYCGLL. Residues 29-325 lie on the Lumenal side of the membrane; that stretch reads THLHELNFER…WNECRSANYA (297 aa). Residues asparagine 149 and asparagine 166 are each glycosylated (N-linked (GlcNAc...) asparagine).

This sequence belongs to the glycosyltransferase 31 family.

The protein resides in the golgi apparatus membrane. It carries out the reaction a ganglioside GM2 (d18:1(4E)) + UDP-alpha-D-galactose = a ganglioside GM1 (d18:1(4E)) + UDP + H(+). Its function is as follows. Neurogenic protein essential for the development and maintenance of epithelial structure. Required in the germline for establishing the follicular epithelium and for determining the dorsal-ventral polarity. Collaborates with Notch on the apical surface of follicle cells to mediate germline-follicle cell adhesion. Brn has a role in chorion formation. The chain is Beta-1,3-galactosyltransferase brn (brn) from Drosophila melanogaster (Fruit fly).